The sequence spans 1161 residues: Nuclear pore complex-interacting protein family member B11 (1161 aa).

The chain crosses the membrane as a helical span at residues 63 to 87 (IIIAFPTSYKVVITLWIVYLWVSLL). Disordered stretches follow at residues 278–580 (ADDN…DDNI) and 892–1161 (SADD…RRLS). Residues 311-321 (PLPPSAPPSAP) are compositionally biased toward pro residues. Composition is skewed to basic and acidic residues over residues 368 to 378 (DNIKTTAERLR), 410 to 420 (DNIKTPAEHLR), 452 to 462 (DNIKTPAERLR), 494 to 504 (DNIKTPAEHLR), 536 to 546 (DNIKTTAEHLR), 918 to 928 (DNIKTPAERLR), 960 to 970 (DNIKTPAERLR), 1002 to 1012 (DNIKTPAERLR), and 1044 to 1054 (DNIKTPAERLR).

The protein belongs to the NPIP family.

It localises to the membrane. The protein is Nuclear pore complex-interacting protein family member B11 (NPIPB11) of Homo sapiens (Human).